Reading from the N-terminus, the 266-residue chain is MDKEFKVLDKGFIRLVDYMGTDARIVQSARVSYGEGTKTVREDAALIDYLLRNKHTSPFEQVVFTFHVKLPIFVARQWIRHRTARLNEISGRYSILKAEFYVPAGKDIALQSSDNKQGRMNEAVPQDLQNEVITSLQKQQEEIYAGYSKLLDKNIARELARINLPLSTYTEWYWQIDLHNLFHFLRLRMDAHAQKEIRDYAEVMFEICKTVTPLACASFERHEKNGVNFSAEELEAIRNLIAGKDSGLKGKELERFNEKLKSGRQV.

Positions 11-222 (GFIRLVDYMG…PLACASFERH (212 aa)) constitute a ThyX domain. FAD is bound by residues S57, 80-82 (RHR), and E88. Residues 77 to 80 (QWIR), 88 to 92 (EISGR), and R161 each bind dUMP. Residues 80 to 90 (RHRTARLNEIS) carry the ThyX motif motif. FAD is bound by residues 177–179 (DLH) and H183. R188 is a binding site for dUMP. R188 serves as the catalytic Involved in ionization of N3 of dUMP, leading to its activation.

The protein belongs to the thymidylate synthase ThyX family. Homotetramer. Requires FAD as cofactor.

The enzyme catalyses dUMP + (6R)-5,10-methylene-5,6,7,8-tetrahydrofolate + NADPH + H(+) = dTMP + (6S)-5,6,7,8-tetrahydrofolate + NADP(+). Its pathway is pyrimidine metabolism; dTTP biosynthesis. In terms of biological role, catalyzes the reductive methylation of 2'-deoxyuridine-5'-monophosphate (dUMP) to 2'-deoxythymidine-5'-monophosphate (dTMP) while utilizing 5,10-methylenetetrahydrofolate (mTHF) as the methyl donor, and NADPH and FADH(2) as the reductant. This chain is Flavin-dependent thymidylate synthase, found in Treponema denticola (strain ATCC 35405 / DSM 14222 / CIP 103919 / JCM 8153 / KCTC 15104).